Consider the following 387-residue polypeptide: 3-ketoacyl-CoA thiolase (387 aa).

The active-site Acyl-thioester intermediate is Cys91. Residues His343 and Cys373 each act as proton acceptor in the active site.

The protein belongs to the thiolase-like superfamily. Thiolase family. Heterotetramer of two alpha chains (FadB) and two beta chains (FadA).

The protein resides in the cytoplasm. It carries out the reaction an acyl-CoA + acetyl-CoA = a 3-oxoacyl-CoA + CoA. It participates in lipid metabolism; fatty acid beta-oxidation. Its function is as follows. Catalyzes the final step of fatty acid oxidation in which acetyl-CoA is released and the CoA ester of a fatty acid two carbons shorter is formed. The chain is 3-ketoacyl-CoA thiolase from Escherichia coli O1:K1 / APEC.